The following is a 102-amino-acid chain: Small ribosomal subunit protein uS10 (102 aa).

This sequence belongs to the universal ribosomal protein uS10 family. In terms of assembly, part of the 30S ribosomal subunit.

Functionally, involved in the binding of tRNA to the ribosomes. The sequence is that of Small ribosomal subunit protein uS10 from Mycoplasma capricolum subsp. capricolum (strain California kid / ATCC 27343 / NCTC 10154).